Consider the following 211-residue polypeptide: Peptidyl-tRNA hydrolase (211 aa).

Y15 lines the tRNA pocket. Catalysis depends on H20, which acts as the Proton acceptor. Residues F66, N68, and N114 each coordinate tRNA. Positions 189-211 are disordered; sequence TKPPRPKATRPAQAQAAPQAGAD. Over residues 197–211 the composition is skewed to low complexity; sequence TRPAQAQAAPQAGAD.

It belongs to the PTH family. As to quaternary structure, monomer.

The protein resides in the cytoplasm. The enzyme catalyses an N-acyl-L-alpha-aminoacyl-tRNA + H2O = an N-acyl-L-amino acid + a tRNA + H(+). In terms of biological role, hydrolyzes ribosome-free peptidyl-tRNAs (with 1 or more amino acids incorporated), which drop off the ribosome during protein synthesis, or as a result of ribosome stalling. Functionally, catalyzes the release of premature peptidyl moieties from peptidyl-tRNA molecules trapped in stalled 50S ribosomal subunits, and thus maintains levels of free tRNAs and 50S ribosomes. The sequence is that of Peptidyl-tRNA hydrolase from Acidovorax ebreus (strain TPSY) (Diaphorobacter sp. (strain TPSY)).